We begin with the raw amino-acid sequence, 60 residues long: Large ribosomal subunit protein uL30 (60 aa).

Belongs to the universal ribosomal protein uL30 family. In terms of assembly, part of the 50S ribosomal subunit.

The protein is Large ribosomal subunit protein uL30 of Leptothrix cholodnii (strain ATCC 51168 / LMG 8142 / SP-6) (Leptothrix discophora (strain SP-6)).